A 262-amino-acid polypeptide reads, in one-letter code: Type III pantothenate kinase (262 aa).

Residue D9–K16 participates in ATP binding. Substrate-binding positions include Y103 and G110–R113. The active-site Proton acceptor is the D112. D134 serves as a coordination point for K(+). T137 contributes to the ATP binding site. Residue T190 participates in substrate binding.

Belongs to the type III pantothenate kinase family. In terms of assembly, homodimer. NH4(+) is required as a cofactor. K(+) serves as cofactor.

Its subcellular location is the cytoplasm. It carries out the reaction (R)-pantothenate + ATP = (R)-4'-phosphopantothenate + ADP + H(+). Its pathway is cofactor biosynthesis; coenzyme A biosynthesis; CoA from (R)-pantothenate: step 1/5. In terms of biological role, catalyzes the phosphorylation of pantothenate (Pan), the first step in CoA biosynthesis. This is Type III pantothenate kinase from Nitratidesulfovibrio vulgaris (strain DSM 19637 / Miyazaki F) (Desulfovibrio vulgaris).